Reading from the N-terminus, the 843-residue chain is Protein translocase subunit SecA 1 (843 aa).

ATP-binding positions include Gln91, 109-113 (GEGKT), and Asp498. The span at 799 to 813 (EAKHVSAEDGKEKVK) shows a compositional bias: basic and acidic residues. The segment at 799-826 (EAKHVSAEDGKEKVKPKPIVKGDQVGRN) is disordered. Residues Cys829, Cys831, Cys840, and His841 each contribute to the Zn(2+) site.

Belongs to the SecA family. Monomer and homodimer. Part of the essential Sec protein translocation apparatus which comprises SecA, SecYEG and auxiliary proteins SecDF. Other proteins may also be involved. Zn(2+) serves as cofactor.

Its subcellular location is the cell membrane. It is found in the cytoplasm. It carries out the reaction ATP + H2O + cellular proteinSide 1 = ADP + phosphate + cellular proteinSide 2.. Its function is as follows. Part of the Sec protein translocase complex. Interacts with the SecYEG preprotein conducting channel. Has a central role in coupling the hydrolysis of ATP to the transfer of proteins into and across the cell membrane, serving as an ATP-driven molecular motor driving the stepwise translocation of polypeptide chains across the membrane. This Staphylococcus aureus (strain MRSA252) protein is Protein translocase subunit SecA 1.